Consider the following 875-residue polypeptide: Alanine--tRNA ligase (875 aa).

Residues H564, H568, C666, and H670 each contribute to the Zn(2+) site.

The protein belongs to the class-II aminoacyl-tRNA synthetase family. Homotetramer. It depends on Zn(2+) as a cofactor.

It localises to the cytoplasm. It catalyses the reaction tRNA(Ala) + L-alanine + ATP = L-alanyl-tRNA(Ala) + AMP + diphosphate. Its function is as follows. Catalyzes the attachment of alanine to tRNA(Ala) in a two-step reaction: alanine is first activated by ATP to form Ala-AMP and then transferred to the acceptor end of tRNA(Ala). Also edits incorrectly charged Ser-tRNA(Ala) and Gly-tRNA(Ala) via its editing domain. In Sodalis glossinidius (strain morsitans), this protein is Alanine--tRNA ligase.